A 127-amino-acid polypeptide reads, in one-letter code: uncharacterized protein (127 aa).

The stretch at 71–126 forms a coiled coil; sequence FYLREYRRIRRRIKELKNRAKYISKGEIAYNPKIMKEVEALKEKLSEIEKKIEELK.

This is an uncharacterized protein from Aquifex aeolicus (strain VF5).